A 136-amino-acid chain; its full sequence is Histone H2B (136 aa).

A compositionally biased stretch (basic and acidic residues) spans 1 to 10; the sequence is MPPKAADKKP. Residues 1-44 are disordered; it reads MPPKAADKKPAAKAPVASKAPEKKDAGKKTASTGEKKKRTKARR. 2 positions are modified to N6-acetyllysine; alternate: Lys8 and Lys9. Glycyl lysine isopeptide (Lys-Gly) (interchain with G-Cter in SUMO); alternate cross-links involve residues Lys8 and Lys9. An N6-acetyllysine modification is found at Lys13. Lys23 carries the N6-acetyllysine; alternate modification. Lys23 participates in a covalent cross-link: Glycyl lysine isopeptide (Lys-Gly) (interchain with G-Cter in SUMO); alternate. Lys24 is covalently cross-linked (Glycyl lysine isopeptide (Lys-Gly) (interchain with G-Cter in SUMO)). A Glycyl lysine isopeptide (Lys-Gly) (interchain with G-Cter in ubiquitin) cross-link involves residue Lys130.

Belongs to the histone H2B family. In terms of assembly, the nucleosome is a histone octamer containing two molecules each of H2A, H2B, H3 and H4 assembled in one H3-H4 heterotetramer and two H2A-H2B heterodimers. The octamer wraps approximately 147 bp of DNA. In terms of processing, monoubiquitinated to form H2BK123ub1. H2BK123ub1 gives a specific tag for epigenetic transcriptional activation and is also prerequisite for H3K4me and H3K79me formation. H2BK123ub1 also modulates the formation of double-strand breaks during meiosis and is a prerequisite for DNA-damage checkpoint activation. Post-translationally, acetylated by GCN5 to form H2BK11ac and H2BK16ac. H2BK16ac can also be formed by ESA1. Acetylation of N-terminal lysines and particularly formation of H2BK11acK16ac has a positive effect on transcription. Sumoylation to form H2BK6su or H2BK7su, and probably also H2BK16su or H2BK17su, occurs preferentially near the telomeres and represses gene transcription.

It localises to the nucleus. The protein localises to the chromosome. In terms of biological role, core component of nucleosome. Nucleosomes wrap and compact DNA into chromatin, limiting DNA accessibility to the cellular machineries which require DNA as a template. Histones thereby play a central role in transcription regulation, DNA repair, DNA replication and chromosomal stability. DNA accessibility is regulated via a complex set of post-translational modifications of histones, also called histone code, and nucleosome remodeling. The protein is Histone H2B (hh2b) of Rosellinia necatrix (White root-rot fungus).